The chain runs to 213 residues: Probable thymidylate kinase 2 (213 aa).

10–17 (GIDGSGKS) is a binding site for ATP.

Belongs to the thymidylate kinase family.

It catalyses the reaction dTMP + ATP = dTDP + ADP. The chain is Probable thymidylate kinase 2 (tmk2) from Saccharolobus solfataricus (strain ATCC 35092 / DSM 1617 / JCM 11322 / P2) (Sulfolobus solfataricus).